The primary structure comprises 178 residues: NADPH azoreductase (178 aa).

106–111 (GGGKGG) is a binding site for NADP(+).

Belongs to the azoreductase type 2 family. Monomer.

It catalyses the reaction N,N-dimethyl-1,4-phenylenediamine + aniline + 2 NADP(+) = 4-(dimethylamino)azobenzene + 2 NADPH + 2 H(+). Functionally, catalyzes the reductive cleavage of azo bond in aromatic azo compounds to the corresponding amines. Requires NADPH as an electron donor for its activity. Compounds with paired naphthalene groups coupled with the azo group are good substrates, with the following preference order: Rocceline &gt; Sumifix Black B &gt; Solar Orange. The protein is NADPH azoreductase (azr) of Bacillus sp. (strain OY1-2).